The chain runs to 247 residues: Adenosylcobinamide-GDP ribazoletransferase (247 aa).

The next 6 membrane-spanning stretches (helical) occupy residues Ile34–Ala54, Cys59–Phe79, Gly113–Leu133, Met138–Tyr158, Val171–Ala193, and Ile194–Ile214.

This sequence belongs to the CobS family. The cofactor is Mg(2+).

Its subcellular location is the cell inner membrane. It carries out the reaction alpha-ribazole + adenosylcob(III)inamide-GDP = adenosylcob(III)alamin + GMP + H(+). The catalysed reaction is alpha-ribazole 5'-phosphate + adenosylcob(III)inamide-GDP = adenosylcob(III)alamin 5'-phosphate + GMP + H(+). Its pathway is cofactor biosynthesis; adenosylcobalamin biosynthesis; adenosylcobalamin from cob(II)yrinate a,c-diamide: step 7/7. In terms of biological role, joins adenosylcobinamide-GDP and alpha-ribazole to generate adenosylcobalamin (Ado-cobalamin). Also synthesizes adenosylcobalamin 5'-phosphate from adenosylcobinamide-GDP and alpha-ribazole 5'-phosphate. The polypeptide is Adenosylcobinamide-GDP ribazoletransferase (Citrobacter koseri (strain ATCC BAA-895 / CDC 4225-83 / SGSC4696)).